Here is a 438-residue protein sequence, read N- to C-terminus: Protein SPMIP7 (438 aa).

Testis-specific.

Its function is as follows. Essential for normal spermatogenesis. This is Protein SPMIP7 from Homo sapiens (Human).